Consider the following 458-residue polypeptide: Chitin deacetylase 2 (458 aa).

Residues 1–51 form the signal peptide; sequence MIPSTAAAALLTLTAGVALAHPGCGGQEIGRRNVGGPMVYRRDVTDEASAA. Asparagine 87, asparagine 99, and asparagine 125 each carry an N-linked (GlcNAc...) asparagine glycan. The region spanning 158-348 is the NodB homology domain; that stretch reads MTWGLGFDDG…IKSAFSYIVP (191 aa). Catalysis depends on aspartate 165, which acts as the Proton acceptor. Residue aspartate 165 participates in acetate binding. Aspartate 166 is a binding site for Co(2+). The N-linked (GlcNAc...) asparagine glycan is linked to asparagine 169. The Co(2+) site is built by histidine 215 and histidine 219. Tyrosine 256 lines the acetate pocket. Asparagine 271 and asparagine 309 each carry an N-linked (GlcNAc...) asparagine glycan. Histidine 322 serves as the catalytic Proton donor. Asparagine 326, asparagine 354, asparagine 363, asparagine 378, and asparagine 393 each carry an N-linked (GlcNAc...) asparagine glycan. Residues 382 to 430 are disordered; sequence STTQKDGSSSTNTSSSGSGSAAGSASATSSSDDSSSSGSASASSSSSNA. Serine 427 carries the GPI-anchor amidated serine lipid modification. Positions 428-458 are cleaved as a propeptide — removed in mature form; it reads SNASSGALGMFDGLSGVGLVLSGVVAGVMLL. Asparagine 429 carries N-linked (GlcNAc...) asparagine glycosylation.

The protein belongs to the polysaccharide deacetylase family. Co(2+) is required as a cofactor. Post-translationally, glycosylated.

It localises to the secreted. The protein resides in the cell wall. It is found in the cell membrane. It carries out the reaction [(1-&gt;4)-N-acetyl-beta-D-glucosaminyl](n) + n H2O = chitosan + n acetate. Hydrolyzes the N-acetamido groups of N-acetyl-D-glucosamine residues in chitin to form chitosan and acetate. Chitosan is required to anchor melanin to the cell wall, for maintenance of cell wall integrity, and for cytokinesis. This Cryptococcus neoformans var. neoformans serotype D (strain B-3501A) (Filobasidiella neoformans) protein is Chitin deacetylase 2.